Reading from the N-terminus, the 493-residue chain is Cysteine--tRNA ligase (493 aa).

A Zn(2+)-binding site is contributed by cysteine 29. A 'HIGH' region motif is present at residues 31–41 (ATVQSEPHIGH). Residues cysteine 214, histidine 239, and glutamate 243 each contribute to the Zn(2+) site. The short motif at 270 to 274 (KMSKS) is the 'KMSKS' region element. Lysine 273 is an ATP binding site.

Belongs to the class-I aminoacyl-tRNA synthetase family. In terms of assembly, monomer. Requires Zn(2+) as cofactor.

It is found in the cytoplasm. It catalyses the reaction tRNA(Cys) + L-cysteine + ATP = L-cysteinyl-tRNA(Cys) + AMP + diphosphate. The chain is Cysteine--tRNA ligase from Renibacterium salmoninarum (strain ATCC 33209 / DSM 20767 / JCM 11484 / NBRC 15589 / NCIMB 2235).